The primary structure comprises 489 residues: Trehalose-6-phosphate synthase (489 aa).

R22 lines the D-glucose 6-phosphate pocket. 42–43 is a UDP-alpha-D-glucose binding site; sequence GG. D-glucose 6-phosphate-binding residues include Y94 and D148. The UDP-alpha-D-glucose site is built by R290 and K295. R328 is a D-glucose 6-phosphate binding site. 393 to 397 provides a ligand contact to UDP-alpha-D-glucose; that stretch reads LVAKE.

Belongs to the glycosyltransferase 20 family. In terms of assembly, homotetramer.

The catalysed reaction is ADP-alpha-D-glucose + D-glucose 6-phosphate = alpha,alpha-trehalose 6-phosphate + ADP + H(+). It carries out the reaction CDP-alpha-D-glucose + D-glucose 6-phosphate = alpha,alpha-trehalose 6-phosphate + CDP + H(+). It catalyses the reaction GDP-alpha-D-glucose + D-glucose 6-phosphate = alpha,alpha-trehalose 6-phosphate + GDP + H(+). The enzyme catalyses TDP-alpha-D-glucose + D-glucose 6-phosphate = 5-methyl-UDP + alpha,alpha-trehalose 6-phosphate + H(+). The catalysed reaction is D-glucose 6-phosphate + UDP-alpha-D-glucose = alpha,alpha-trehalose 6-phosphate + UDP + H(+). It functions in the pathway glycan biosynthesis; trehalose biosynthesis. In terms of biological role, probably involved in the osmoprotection via the biosynthesis of trehalose and in the production of glycogen and alpha-glucan via the TreS-Pep2 branch involved in the biosynthesis of maltose-1-phosphate (M1P). Catalyzes the transfer of glucose from UDP-glucose (UDP-Glc) to D-glucose 6-phosphate (Glc-6-P) to form trehalose-6-phosphate. Probably also able to use ADP-Glc, CDP-Glc, GDP-Glc and TDP-Glc as glucosyl donors. The protein is Trehalose-6-phosphate synthase of Mycobacterium sp. (strain KMS).